The primary structure comprises 711 residues: Myb-like protein B (711 aa).

A compositionally biased stretch (low complexity) spans 24-50 (QPQQSIQQQQQQQQQQQQQQQQQQQQQ). 2 disordered regions span residues 24–70 (QPQQ…SPQL) and 113–235 (NYHT…IINN). Composition is skewed to polar residues over residues 113–139 (NYHT…SPPT) and 148–157 (TPLSSSTGFS). Low complexity-rich tracts occupy residues 158–187 (NNNN…NNNI) and 198–235 (NNYP…IINN). 2 HTH myb-type domains span residues 428-490 (RESI…SPEI) and 491-542 (KKGS…SRQT). DNA-binding regions (H-T-H motif) lie at residues 462-486 (WKKI…KRVL) and 514-538 (WKNV…KAIM). A Myb-like domain is found at 540 to 598 (RQTEWNQLEDDILTKKIKLMTQNNEKISFQQVSKHLARAKTTKIPRTALECKSRWSQLN). Positions 598–640 (NSTNVNNNNNNNNNSITTSSSNTNQQQQSTMVTPTSSPLSSPI) are disordered.

The protein resides in the nucleus. In terms of biological role, transcriptional activator that initiates multicellular development by induction of adenylyl cyclase expression. The sequence is that of Myb-like protein B (mybB) from Dictyostelium discoideum (Social amoeba).